The primary structure comprises 159 residues: Cytochrome c-type biogenesis protein CcmE (159 aa).

At 1–8 (MNLRRKNR) the chain is on the cytoplasmic side. Residues 9 to 29 (LWVVCAVLAGLALTTALVLYA) traverse the membrane as a helical; Signal-anchor for type II membrane protein segment. At 30–159 (LRANIDLFYT…PQRADKDTSS (130 aa)) the chain is on the periplasmic side. Residues 129–159 (KHDENYTPPEVEKAMQENHRRPQRADKDTSS) form a disordered region. The heme site is built by histidine 130 and tyrosine 134.

This sequence belongs to the CcmE/CycJ family.

The protein resides in the cell inner membrane. In terms of biological role, heme chaperone required for the biogenesis of c-type cytochromes. Transiently binds heme delivered by CcmC and transfers the heme to apo-cytochromes in a process facilitated by CcmF and CcmH. In Salmonella paratyphi A (strain ATCC 9150 / SARB42), this protein is Cytochrome c-type biogenesis protein CcmE.